We begin with the raw amino-acid sequence, 111 residues long: Large ribosomal subunit protein P2 (111 aa).

The segment covering 63–84 (ASMPTGGAPAAAAGGAATAPAA) has biased composition (low complexity). The interval 63 to 111 (ASMPTGGAPAAAAGGAATAPAAEAKEAKKEEKKEESEEEDEDMGFGLFD) is disordered. Residues 85 to 97 (EAKEAKKEEKKEE) are compositionally biased toward basic and acidic residues. The residue at position 98 (Ser98) is a Phosphoserine.

As to quaternary structure, part of the ribosomal stalk of the large ribosomal subunit; P1 and P2 exist as dimers which assemble on the P0 scaffold.

In terms of biological role, plays an important role in the elongation step of protein synthesis. The sequence is that of Large ribosomal subunit protein P2 from Artemia salina (Brine shrimp).